The sequence spans 336 residues: Torsin-1B (336 aa).

The N-terminal stretch at Met1–Ala24 is a signal peptide. N-linked (GlcNAc...) asparagine glycosylation is present at Asn64. An ATP-binding site is contributed by Gly109–Asn116. An N-linked (GlcNAc...) asparagine glycan is attached at Asn165.

It belongs to the ClpA/ClpB family. Torsin subfamily. As to quaternary structure, homohexamer. Interacts with TOR1A; the interaction may be specific of neural tissues. Interacts with TOR1AIP1; TOR1AIP1 is required for TOR1B location on the nuclear membrane. Interacts (ATP-bound) with TOR1AIP2; important for endoplasmic reticulum integrity. Post-translationally, N-glycosylated. In terms of tissue distribution, widely expressed with low levels in brain.

The protein localises to the endoplasmic reticulum lumen. It localises to the nucleus membrane. It catalyses the reaction ATP + H2O = ADP + phosphate + H(+). In terms of biological role, may serve as a molecular chaperone assisting in the proper folding of secreted and/or membrane proteins. Plays a role in non-neural cells nuclear envelope and endoplasmic reticulum integrity. May have a redundant function with TOR1A in non-neural tissues. This Homo sapiens (Human) protein is Torsin-1B (TOR1B).